The chain runs to 561 residues: Urocanate hydratase (561 aa).

NAD(+) contacts are provided by residues 52–53 (GG), glutamine 130, 176–178 (GMG), glutamate 196, arginine 201, 242–243 (NA), 263–267 (QTSAH), 273–274 (YL), and tyrosine 322. Cysteine 410 is an active-site residue. Glycine 492 is a binding site for NAD(+).

It belongs to the urocanase family. It depends on NAD(+) as a cofactor.

Its subcellular location is the cytoplasm. The enzyme catalyses 4-imidazolone-5-propanoate = trans-urocanate + H2O. It participates in amino-acid degradation; L-histidine degradation into L-glutamate; N-formimidoyl-L-glutamate from L-histidine: step 2/3. Functionally, catalyzes the conversion of urocanate to 4-imidazolone-5-propionate. The polypeptide is Urocanate hydratase (Salmonella choleraesuis (strain SC-B67)).